The chain runs to 127 residues: Large ribosomal subunit protein bL12c (127 aa).

Residues 104–127 form a disordered region; the sequence is GVAKDAAEEAKKQIEDAGGKASLK. The segment covering 105–121 has biased composition (basic and acidic residues); it reads VAKDAAEEAKKQIEDAG.

It belongs to the bacterial ribosomal protein bL12 family. In terms of assembly, homodimer. Part of the ribosomal stalk of the 50S ribosomal subunit. Forms a multimeric L10(L12)X complex, where L10 forms an elongated spine to which 2 to 4 L12 dimers bind in a sequential fashion. Binds GTP-bound translation factors.

The protein resides in the plastid. Its subcellular location is the chloroplast. Its function is as follows. Forms part of the ribosomal stalk which helps the ribosome interact with GTP-bound translation factors. Is thus essential for accurate translation. This Trieres chinensis (Marine centric diatom) protein is Large ribosomal subunit protein bL12c.